The chain runs to 103 residues: Co-chaperonin GroES (103 aa).

It belongs to the GroES chaperonin family. In terms of assembly, heptamer of 7 subunits arranged in a ring. Interacts with the chaperonin GroEL.

The protein localises to the cytoplasm. Functionally, together with the chaperonin GroEL, plays an essential role in assisting protein folding. The GroEL-GroES system forms a nano-cage that allows encapsulation of the non-native substrate proteins and provides a physical environment optimized to promote and accelerate protein folding. GroES binds to the apical surface of the GroEL ring, thereby capping the opening of the GroEL channel. This is Co-chaperonin GroES from Nostoc punctiforme (strain ATCC 29133 / PCC 73102).